Reading from the N-terminus, the 488-residue chain is Malonate-semialdehyde dehydrogenase (488 aa).

Residues A150, F152, K176, E179, R180, S229, and T251 each contribute to the NAD(+) site. The active-site Nucleophile is C284. E382 lines the NAD(+) pocket.

Belongs to the aldehyde dehydrogenase family. IolA subfamily. In terms of assembly, homotetramer.

The catalysed reaction is 3-oxopropanoate + NAD(+) + CoA + H2O = hydrogencarbonate + acetyl-CoA + NADH + H(+). It catalyses the reaction 2-methyl-3-oxopropanoate + NAD(+) + CoA + H2O = propanoyl-CoA + hydrogencarbonate + NADH + H(+). The protein operates within polyol metabolism; myo-inositol degradation into acetyl-CoA; acetyl-CoA from myo-inositol: step 7/7. Catalyzes the oxidation of malonate semialdehyde (MSA) and methylmalonate semialdehyde (MMSA) into acetyl-CoA and propanoyl-CoA, respectively. Is involved in a myo-inositol catabolic pathway. Bicarbonate, and not CO2, is the end-product of the enzymatic reaction. The sequence is that of Malonate-semialdehyde dehydrogenase from Listeria monocytogenes serovar 1/2a (strain ATCC BAA-679 / EGD-e).